Reading from the N-terminus, the 277-residue chain is Peptide deformylase 1A, chloroplastic (277 aa).

Residues cysteine 196 and histidine 238 each contribute to the Zn(2+) site. Residue glutamate 239 is part of the active site. Histidine 242 contacts Zn(2+).

It belongs to the polypeptide deformylase family. Zn(2+) serves as cofactor.

It localises to the plastid. The protein localises to the chloroplast stroma. It catalyses the reaction N-terminal N-formyl-L-methionyl-[peptide] + H2O = N-terminal L-methionyl-[peptide] + formate. Functionally, removes the formyl group from the N-terminal Met of newly synthesized proteins. This is Peptide deformylase 1A, chloroplastic (PDF1A) from Solanum lycopersicum (Tomato).